Here is a 101-residue protein sequence, read N- to C-terminus: Ascorbate-specific PTS system EIIB component (101 aa).

A PTS EIIB type-2 domain is found at 1–100 (MTVRILAVCG…VIKEHFPQDV (100 aa)). Cys-9 (phosphocysteine intermediate) is an active-site residue. The residue at position 9 (Cys-9) is a Phosphocysteine.

It localises to the cytoplasm. The enzyme catalyses N(pros)-phospho-L-histidyl-[protein] + L-ascorbate(out) = L-ascorbate 6-phosphate(in) + L-histidyl-[protein]. Functionally, the phosphoenolpyruvate-dependent sugar phosphotransferase system (sugar PTS), a major carbohydrate active transport system, catalyzes the phosphorylation of incoming sugar substrates concomitantly with their translocation across the cell membrane. The enzyme II UlaABC PTS system is involved in ascorbate transport. The chain is Ascorbate-specific PTS system EIIB component (ulaB) from Escherichia coli O157:H7.